Consider the following 443-residue polypeptide: Chromosomal replication initiator protein DnaA (443 aa).

The domain I, interacts with DnaA modulators stretch occupies residues 1 to 75 (MNTQLNEIWQ…AIKQVTFKEY (75 aa)). The segment at 75-105 (YEIAFIVPSQENLNKLTKQTESAGNEDSPLS) is domain II. The segment at 106 to 321 (VLNPKYTFDT…GALNRVIAYS (216 aa)) is domain III, AAA+ region. The ATP site is built by G150, G152, K153, and T154. Residues 322 to 443 (SLTENEITVE…SEIKRNLLGK (122 aa)) are domain IV, binds dsDNA.

The protein belongs to the DnaA family. As to quaternary structure, oligomerizes as a right-handed, spiral filament on DNA at oriC.

Its subcellular location is the cytoplasm. In terms of biological role, plays an essential role in the initiation and regulation of chromosomal replication. ATP-DnaA binds to the origin of replication (oriC) to initiate formation of the DNA replication initiation complex once per cell cycle. Binds the DnaA box (a 9 base pair repeat at the origin) and separates the double-stranded (ds)DNA. Forms a right-handed helical filament on oriC DNA; dsDNA binds to the exterior of the filament while single-stranded (ss)DNA is stabiized in the filament's interior. The ATP-DnaA-oriC complex binds and stabilizes one strand of the AT-rich DNA unwinding element (DUE), permitting loading of DNA polymerase. After initiation quickly degrades to an ADP-DnaA complex that is not apt for DNA replication. Binds acidic phospholipids. This is Chromosomal replication initiator protein DnaA from Acetivibrio thermocellus (strain ATCC 27405 / DSM 1237 / JCM 9322 / NBRC 103400 / NCIMB 10682 / NRRL B-4536 / VPI 7372) (Clostridium thermocellum).